Consider the following 93-residue polypeptide: MANTKSAIKRIKISERNRIRNRVRLGKIKFYTKQFLKFLNENNIEEAKKILPEVISAIDKAAQKGTLHKNTAARKKSKLMKLLNQKLSANLSS.

Belongs to the bacterial ribosomal protein bS20 family.

Its function is as follows. Binds directly to 16S ribosomal RNA. The sequence is that of Small ribosomal subunit protein bS20 from Dictyoglomus turgidum (strain DSM 6724 / Z-1310).